Reading from the N-terminus, the 729-residue chain is Fatty acid oxidation complex subunit alpha (729 aa).

The interval 1–189 (MLYKGDTLYL…KIGLVDGVVK (189 aa)) is enoyl-CoA hydratase/isomerase. Asp296 provides a ligand contact to substrate. The interval 311–729 (ETPKQAAVLG…ARPVGDLKTA (419 aa)) is 3-hydroxyacyl-CoA dehydrogenase. NAD(+)-binding positions include Met324, Asp343, 400–402 (VVE), Lys407, and Ser429. His450 functions as the For 3-hydroxyacyl-CoA dehydrogenase activity in the catalytic mechanism. Position 453 (Asn453) interacts with NAD(+). Residues Asn500 and Tyr660 each contribute to the substrate site. A disordered region spans residues 708–729 (RHNEPYYPPVEPARPVGDLKTA).

This sequence in the N-terminal section; belongs to the enoyl-CoA hydratase/isomerase family. In the C-terminal section; belongs to the 3-hydroxyacyl-CoA dehydrogenase family. As to quaternary structure, heterotetramer of two alpha chains (FadB) and two beta chains (FadA).

It carries out the reaction a (3S)-3-hydroxyacyl-CoA + NAD(+) = a 3-oxoacyl-CoA + NADH + H(+). The catalysed reaction is a (3S)-3-hydroxyacyl-CoA = a (2E)-enoyl-CoA + H2O. The enzyme catalyses a 4-saturated-(3S)-3-hydroxyacyl-CoA = a (3E)-enoyl-CoA + H2O. It catalyses the reaction (3S)-3-hydroxybutanoyl-CoA = (3R)-3-hydroxybutanoyl-CoA. It carries out the reaction a (3Z)-enoyl-CoA = a 4-saturated (2E)-enoyl-CoA. The catalysed reaction is a (3E)-enoyl-CoA = a 4-saturated (2E)-enoyl-CoA. The protein operates within lipid metabolism; fatty acid beta-oxidation. Its function is as follows. Involved in the aerobic and anaerobic degradation of long-chain fatty acids via beta-oxidation cycle. Catalyzes the formation of 3-oxoacyl-CoA from enoyl-CoA via L-3-hydroxyacyl-CoA. It can also use D-3-hydroxyacyl-CoA and cis-3-enoyl-CoA as substrate. The sequence is that of Fatty acid oxidation complex subunit alpha from Citrobacter koseri (strain ATCC BAA-895 / CDC 4225-83 / SGSC4696).